The following is a 559-amino-acid chain: Glycerol kinase (559 aa).

Position 20 (Thr-20) interacts with ADP. 3 residues coordinate ATP: Thr-20, Ser-21, and Ser-22. Thr-20 contacts sn-glycerol 3-phosphate. An ADP-binding site is contributed by Arg-24. 3 residues coordinate sn-glycerol 3-phosphate: Arg-94, Glu-95, and Tyr-148. Glycerol contacts are provided by Arg-94, Glu-95, and Tyr-148. Gly-252 is a beta-D-fructose 1,6-bisphosphate binding site. Residue Asp-265 coordinates sn-glycerol 3-phosphate. The glycerol site is built by Asp-265 and Gln-266. ADP is bound by residues Thr-287, Gly-332, Gly-433, and Asn-437. The ATP site is built by Thr-287, Gly-332, and Gly-433. Residue Glu-501 participates in Zn(2+) binding. Residues 532–552 (IFCSLPLGFFIVSSVVMLIGA) form a helical membrane-spanning segment.

It belongs to the FGGY kinase family.

The protein resides in the mitochondrion outer membrane. It localises to the nucleus. Its subcellular location is the cytoplasm. It is found in the cytosol. The catalysed reaction is glycerol + ATP = sn-glycerol 3-phosphate + ADP + H(+). Its pathway is polyol metabolism; glycerol degradation via glycerol kinase pathway; sn-glycerol 3-phosphate from glycerol: step 1/1. Kinase that plays a key role in glycerol metabolism, catalyzing its phosphorylation to produce sn-glycerol 3-phosphate. Sn-glycerol 3-phosphate is a crucial intermediate in various metabolic pathways, such as the synthesis of glycerolipids and triglycerides, glycogenesis, glycolysis and gluconeogenesis. This Bos taurus (Bovine) protein is Glycerol kinase.